Reading from the N-terminus, the 147-residue chain is Large ribosomal subunit protein uL15 (147 aa).

The interval 1-47 is disordered; that stretch reads MKLHELKPAEGAVRAKRRLGRGTATGQGKTAGRGQKGQWSRSGGGVR. A compositionally biased stretch (gly residues) spans 23–35; the sequence is TATGQGKTAGRGQ.

This sequence belongs to the universal ribosomal protein uL15 family. As to quaternary structure, part of the 50S ribosomal subunit.

Functionally, binds to the 23S rRNA. This Clostridioides difficile (strain 630) (Peptoclostridium difficile) protein is Large ribosomal subunit protein uL15.